Here is a 396-residue protein sequence, read N- to C-terminus: MTVTIKELTNHNYIDHELSATLDSTDAFEGPEKLLEIWFFPHKKSITTEKTLRNIGMDRWIEILKLVKCEVLSMKKTKELDAFLLSESSLFVFDHKLTMKTCGTTTTLFCLEKLFQIVEQELSWAFRTTQGGKYKPFKVFYSRRCFLFPCKQAAIHQNWADEVDYLNKFFDNGKSYSVGRNDKSNHWNLYVTETDRSTPKGKEYIEDDDETFEVLMTELDPECASKFVCGPEASTTALVEPNEDKGHNLGYQMTKNTRLDEIYVNSAQDSDLSFHHDAFAFTPCGYSSNMILAEKYYYTLHVTPEKGWSYASFESNIPVFDISQGKQDNLDVLLHILNVFQPREFSMTFFTKNYQNQSFQKLLSINESLPDYIKLDKIVYDLDDYHLFYMKLQKKI.

Residues glutamate 29 and glutamate 32 contribute to the active site. Serine 88 (schiff-base intermediate with substrate; via pyruvic acid) is an active-site residue. Serine 88 carries the pyruvic acid (Ser); by autocatalysis modification. The active-site Proton donor; for catalytic activity is cysteine 102. Catalysis depends on proton acceptor; for processing activity residues serine 287 and histidine 301.

It belongs to the eukaryotic AdoMetDC family. Pyruvate serves as cofactor. Is synthesized initially as an inactive proenzyme. Formation of the active enzyme involves a self-maturation process in which the active site pyruvoyl group is generated from an internal serine residue via an autocatalytic post-translational modification. Two non-identical subunits are generated from the proenzyme in this reaction, and the pyruvate is formed at the N-terminus of the alpha chain, which is derived from the carboxyl end of the proenzyme. The post-translation cleavage follows an unusual pathway, termed non-hydrolytic serinolysis, in which the side chain hydroxyl group of the serine supplies its oxygen atom to form the C-terminus of the beta chain, while the remainder of the serine residue undergoes an oxidative deamination to produce ammonia and the pyruvoyl group blocking the N-terminus of the alpha chain.

The enzyme catalyses S-adenosyl-L-methionine + H(+) = S-adenosyl 3-(methylsulfanyl)propylamine + CO2. Its pathway is amine and polyamine biosynthesis; S-adenosylmethioninamine biosynthesis; S-adenosylmethioninamine from S-adenosyl-L-methionine: step 1/1. Catalyzes the decarboxylation of S-adenosylmethionine, a key step in the biosynthetic pathway for spermidine and spermine. It is essential for normal growth, sporulation, and maintenance of ds-RNA virus. The polypeptide is S-adenosylmethionine decarboxylase proenzyme (SPE2) (Saccharomyces cerevisiae (strain ATCC 204508 / S288c) (Baker's yeast)).